Here is a 329-residue protein sequence, read N- to C-terminus: Ferredoxin--NAD(P)(+) reductase CarAd (329 aa).

Residues 2 to 92 (YQLKIEGQAP…DLRIKVAVQD (91 aa)) form the 2Fe-2S ferredoxin-type domain. Residues Cys35, Cys40, Cys43, and Cys76 each contribute to the [2Fe-2S] cluster site. The FAD-binding FR-type domain maps to 100 to 200 (ISRMEAEVVE…TGPMGTSFFR (101 aa)).

As to quaternary structure, monomer. Carbazole 1,9a-dioxygenase complex consists of a terminal oxygenase component CarAa, a ferredoxin reductase component CarAd and a ferredoxin component CarAc. [2Fe-2S] cluster serves as cofactor. Requires FAD as cofactor.

The enzyme catalyses 2 reduced [2Fe-2S]-[ferredoxin] + NAD(+) + H(+) = 2 oxidized [2Fe-2S]-[ferredoxin] + NADH. The catalysed reaction is 2 reduced [2Fe-2S]-[ferredoxin] + NADP(+) + H(+) = 2 oxidized [2Fe-2S]-[ferredoxin] + NADPH. In terms of biological role, part of the multicomponent carbazole 1,9a-dioxygenase (CARDO), that converts carbazole (CAR) into 2-aminobiphenyl-2,3-diol. It can use both NAD and NADP as electron donors, but NAD is supposed to be the physiological electron donor. The polypeptide is Ferredoxin--NAD(P)(+) reductase CarAd (carAd) (Metapseudomonas resinovorans (Pseudomonas resinovorans)).